The primary structure comprises 3122 residues: Abnormal spindle-like microcephaly-associated protein homolog (3122 aa).

2 disordered regions span residues 1-26 (MATM…AGDP) and 139-169 (KRSL…NESF). Positions 10–21 (PEERGRRARPDP) are enriched in basic and acidic residues. A sufficient for interaction with KATNA1:KATNB1 region spans residues 289-388 (STQTQIHFLS…KDSMGHVGQQ (100 aa)). Phosphoserine occurs at positions 348, 373, and 573. A disordered region spans residues 579–600 (PSTVARTTKKEGHTSKRISSLE). The 137-residue stretch at 888–1024 (KASKELLLAF…LLWKIALAFQ (137 aa)) folds into the Calponin-homology (CH) 1 domain. Positions 1025–1045 (VDISLNLDQLKEEIDFLKHTH) form a coiled coil. Serine 1071 is modified (phosphoserine). Positions 1078-1229 (GDSVQLLMDW…YLSFLCARLL (152 aa)) constitute a Calponin-homology (CH) 2 domain. 32 consecutive IQ domains span residues 1234-1263 (EIRA…RDKA), 1315-1346 (QNKS…VILQ), 1410-1439 (QTKA…VVIQ), 1504-1535 (KRAA…CVLQ), 1550-1579 (LKKM…AAIT), 1600-1629 (TRSS…SVIK), 1623-1652 (ALAS…ATIK), 1696-1725 (VRES…AAIS), 1719-1750 (QCKA…LVIQ), 1769-1798 (VKRA…AAVT), 1792-1821 (QSTA…SAVK), 1842-1871 (TREA…AAVK), 1865-1896 (QHEA…AVIQ), 1915-1946 (LRHA…ALIQ), 1938-1967 (QHQC…AALQ), 1988-2017 (TKAA…AAVT), 2011-2042 (CHKA…IVIQ), 2061-2092 (LRRA…TLIE), 2134-2165 (TLKA…TLIQ), 2157-2188 (MHFA…TMVQ), 2207-2238 (LRRS…TLIQ), 2230-2261 (MHLA…IWIQ), 2279-2310 (LEKA…TVIQ), 2302-2333 (MHRA…VVIQ), 2343-2374 (QKHA…TLIQ), 2366-2397 (MHSS…IFVQ), 2416-2447 (LRKA…ALIQ), 2491-2522 (QHSA…KVIQ), 2602-2633 (KVEA…NIIE), 2674-2705 (RHRA…LIIQ), 2724-2755 (LKKS…RLFH), and 2849-2880 (ITSC…IRRS).

Interacts with KATNA1 and KATNB1; katanin complex formation KATNA1:KATNB1 is required for the association. Expressed in fetal brain, peripheral nervous system, liver and spleen. In the adult, expressed exclusively in testis, ovary and spleen.

Its subcellular location is the cytoplasm. The protein resides in the cytoskeleton. It localises to the spindle. The protein localises to the nucleus. Functionally, involved in mitotic spindle regulation and coordination of mitotic processes. The function in regulating microtubule dynamics at spindle poles including spindle orientation, astral microtubule density and poleward microtubule flux seem to depend on its association with the katanin complex formed by KATNA1 and KATNB1. Enhances the microtubule lattice severing activity of KATNA1 by recruiting the katanin complex to microtubules. Can block microtubule minus-end growth and reversely this function can be enhanced by the katanin complex. May have a preferential role in regulating neurogenesis. This chain is Abnormal spindle-like microcephaly-associated protein homolog (Aspm), found in Mus musculus (Mouse).